The chain runs to 1011 residues: Vacuolar membrane protease (1011 aa).

Over 1–9 the chain is Cytoplasmic; it reads MSNPFAFRS. The chain crosses the membrane as a helical span at residues 10–30; the sequence is AQVTFWTTVVYLALLVPLVVI. Topologically, residues 31–378 are vacuolar; the sequence is NEGVPPVQPD…TFVLFGLRGM (348 aa). N-linked (GlcNAc...) asparagine glycosylation is found at N50 and N106. The Zn(2+) site is built by H159 and D171. E205 functions as the Proton acceptor in the catalytic mechanism. The Zn(2+) site is built by E206, E231, and H304. The N-linked (GlcNAc...) asparagine glycan is linked to N331. A helical membrane pass occupies residues 379–399; sequence FAWSLTVLIVGPLTLFGMMYL. The Cytoplasmic segment spans residues 400-439; the sequence is VHKQGKGYAFHTKLRATSDSSSEDGDDEDGEVIRLGGWKG. A helical transmembrane segment spans residues 440–460; sequence FFRFPFALIVAGALVTGAALL. Topologically, residues 461 to 471 are vacuolar; the sequence is LRKMNPFIIYS. Residues 472–492 form a helical membrane-spanning segment; the sequence is SEYAVWAMMISLFYFGFWLIM. The Cytoplasmic portion of the chain corresponds to 493–505; the sequence is RGSSYTRPSALHR. Residues 506 to 526 form a helical membrane-spanning segment; the sequence is LYVHIWLFILGWVALVFATVL. The Vacuolar segment spans residues 527–536; that stretch reads EDRMRIASGY. A helical membrane pass occupies residues 537 to 557; it reads IFVFWESQVFLATLVAVCELF. Topologically, residues 558-682 are cytoplasmic; it reads SLPRKIDFAR…WSGPMVTSTW (125 aa). The span at 595-609 shows a compositional bias: polar residues; the sequence is EATSPQRAGQSSNSP. 2 disordered regions span residues 595–627 and 650–671; these read EATS…LFRK and IMDS…EGEQ. Positions 610–622 are enriched in acidic residues; it reads QEDDEDDVPDEET. The helical transmembrane segment at 683-703 threads the bilayer; sequence ILQFLLLGPFMVILGGQVGLL. Topologically, residues 704 to 719 are vacuolar; the sequence is LTSAVNQTGVDGSSLL. N709 is a glycosylation site (N-linked (GlcNAc...) asparagine). The chain crosses the membrane as a helical span at residues 720–740; the sequence is APYLMIAALSAILLMPLSPFI. Over 741–747 the chain is Cytoplasmic; it reads HRVTKHV. Residues 748 to 768 traverse the membrane as a helical segment; that stretch reads PLFLLAVAFATLIYSLVAFPF. The Vacuolar portion of the chain corresponds to 769–1011; sequence SPRAPYKTFF…LVEGSKAFKV (243 aa). N872 carries an N-linked (GlcNAc...) asparagine glycan.

This sequence belongs to the peptidase M28 family. Requires Zn(2+) as cofactor.

It is found in the vacuole membrane. Its function is as follows. May be involved in vacuolar sorting and osmoregulation. This Pyricularia oryzae (strain 70-15 / ATCC MYA-4617 / FGSC 8958) (Rice blast fungus) protein is Vacuolar membrane protease.